A 189-amino-acid polypeptide reads, in one-letter code: Probable nicotinate-nucleotide adenylyltransferase (189 aa).

Belongs to the NadD family.

The enzyme catalyses nicotinate beta-D-ribonucleotide + ATP + H(+) = deamido-NAD(+) + diphosphate. It functions in the pathway cofactor biosynthesis; NAD(+) biosynthesis; deamido-NAD(+) from nicotinate D-ribonucleotide: step 1/1. In terms of biological role, catalyzes the reversible adenylation of nicotinate mononucleotide (NaMN) to nicotinic acid adenine dinucleotide (NaAD). The chain is Probable nicotinate-nucleotide adenylyltransferase from Bacillus anthracis (strain CDC 684 / NRRL 3495).